The primary structure comprises 448 residues: Cysteine--tRNA ligase (448 aa).

Cysteine 29 is a Zn(2+) binding site. Positions 31 to 41 match the 'HIGH' region motif; the sequence is PTVYNYIHIGN. Residues cysteine 212, histidine 237, and glutamate 241 each coordinate Zn(2+). The 'KMSKS' region signature appears at 269–273; sequence KMSKS. Lysine 272 serves as a coordination point for ATP.

Belongs to the class-I aminoacyl-tRNA synthetase family. In terms of assembly, monomer. The cofactor is Zn(2+).

It localises to the cytoplasm. The enzyme catalyses tRNA(Cys) + L-cysteine + ATP = L-cysteinyl-tRNA(Cys) + AMP + diphosphate. In Streptococcus equi subsp. zooepidemicus (strain MGCS10565), this protein is Cysteine--tRNA ligase.